The chain runs to 444 residues: uncharacterized protein (444 aa).

The Radical SAM core domain maps to 164 to 381 (GAYGKSFLLE…EKALKKEGIR (218 aa)). [4Fe-4S] cluster-binding residues include cysteine 178, cysteine 182, and cysteine 185.

Requires [4Fe-4S] cluster as cofactor.

This is an uncharacterized protein from Methanocaldococcus jannaschii (strain ATCC 43067 / DSM 2661 / JAL-1 / JCM 10045 / NBRC 100440) (Methanococcus jannaschii).